Here is a 383-residue protein sequence, read N- to C-terminus: Lipid-A-disaccharide synthase (383 aa).

The protein belongs to the LpxB family.

The catalysed reaction is 2-N,3-O-bis[(3R)-3-hydroxytetradecanoyl]-alpha-D-glucosaminyl 1-phosphate + UDP-2-N,3-O-bis[(3R)-3-hydroxytetradecanoyl]-alpha-D-glucosamine = lipid A disaccharide (E. coli) + UDP + H(+). It carries out the reaction a lipid X + a UDP-2-N,3-O-bis[(3R)-3-hydroxyacyl]-alpha-D-glucosamine = a lipid A disaccharide + UDP + H(+). The protein operates within glycolipid biosynthesis; lipid IV(A) biosynthesis; lipid IV(A) from (3R)-3-hydroxytetradecanoyl-[acyl-carrier-protein] and UDP-N-acetyl-alpha-D-glucosamine: step 5/6. Functionally, condensation of UDP-2,3-diacylglucosamine and 2,3-diacylglucosamine-1-phosphate to form lipid A disaccharide, a precursor of lipid A, a phosphorylated glycolipid that anchors the lipopolysaccharide to the outer membrane of the cell. The protein is Lipid-A-disaccharide synthase of Klebsiella pneumoniae subsp. pneumoniae (strain ATCC 700721 / MGH 78578).